The chain runs to 538 residues: uncharacterized protein (538 aa).

Disordered stretches follow at residues 20 to 71 (RLSA…GGAQ), 151 to 211 (LWAE…EHPK), 288 to 331 (MLQP…QQHK), and 458 to 482 (EFEKASKLTGPGEASSGVGHSLKNY). The span at 154–171 (ESEKSESKGTRRDFRSYD) shows a compositional bias: basic and acidic residues.

This is an uncharacterized protein from Homo sapiens (Human).